A 524-amino-acid polypeptide reads, in one-letter code: Light-independent protochlorophyllide reductase subunit B (524 aa).

Aspartate 36 contacts [4Fe-4S] cluster. Aspartate 290 (proton donor) is an active-site residue. 425-426 serves as a coordination point for substrate; the sequence is GL.

It belongs to the ChlB/BchB/BchZ family. As to quaternary structure, protochlorophyllide reductase is composed of three subunits; ChlL, ChlN and ChlB. Forms a heterotetramer of two ChlB and two ChlN subunits. It depends on [4Fe-4S] cluster as a cofactor.

It catalyses the reaction chlorophyllide a + oxidized 2[4Fe-4S]-[ferredoxin] + 2 ADP + 2 phosphate = protochlorophyllide a + reduced 2[4Fe-4S]-[ferredoxin] + 2 ATP + 2 H2O. Its pathway is porphyrin-containing compound metabolism; chlorophyll biosynthesis (light-independent). Functionally, component of the dark-operative protochlorophyllide reductase (DPOR) that uses Mg-ATP and reduced ferredoxin to reduce ring D of protochlorophyllide (Pchlide) to form chlorophyllide a (Chlide). This reaction is light-independent. The NB-protein (ChlN-ChlB) is the catalytic component of the complex. The protein is Light-independent protochlorophyllide reductase subunit B of Synechococcus sp. (strain CC9605).